Consider the following 284-residue polypeptide: Exported repetitive protein (284 aa).

The signal sequence occupies residues 1 to 22; it reads MPNRRRRKLSTAMSAVAALAVA. Residues 23 to 252 are Extracellular-facing; sequence SPCAYFLVYE…MPSIMQAVQN (230 aa). Positions 80 to 216 are disordered; sequence TGSGDASTGL…SPATTSTGGG (137 aa). The segment covering 86–110 has biased composition (low complexity); that stretch reads STGLTGPGLTSPGLTSPGLTSPGLT. A run of 12 repeats spans residues 92–96, 97–101, 102–106, 107–111, 112–116, 117–121, 144–148, 149–153, 154–158, 159–163, 164–168, and 169–173. Residues 92-121 are 6 X 5 AA tandem repeats of P-[GA]-L-T-S; sequence PGLTSPGLTSPGLTSPGLTDPALTSPGLTP. The 6 X 5 AA approximate tandem repeats of P-[ATG]-[LG]-X-X stretch occupies residues 144-173; that stretch reads PALTNPALTSPTGATPGLTSPTGLDPALGG. The segment covering 145 to 165 has biased composition (polar residues); it reads ALTNPALTSPTGATPGLTSPT. Residues 202-212 show a composition bias toward low complexity; it reads GTIPSSPATTS. The helical transmembrane segment at 253-273 threads the bilayer; sequence GGAAAPAASPPVPPIPAAAAV. Topologically, residues 274-284 are cytoplasmic; it reads PPTDPITVPVA.

To M.leprae 28 kDa antigen.

It localises to the cell membrane. In terms of biological role, surface-exposed protein required for multiplication and intracellular growth. This is Exported repetitive protein (erp) from Mycobacterium bovis (strain ATCC BAA-935 / AF2122/97).